The primary structure comprises 271 residues: Type III pantothenate kinase (271 aa).

6 to 13 contacts ATP; it reads DVRNTHTV. 109–112 is a binding site for substrate; it reads GADR. Catalysis depends on D111, which acts as the Proton acceptor. D131 is a binding site for K(+). An ATP-binding site is contributed by S134. T186 lines the substrate pocket.

This sequence belongs to the type III pantothenate kinase family. In terms of assembly, homodimer. It depends on NH4(+) as a cofactor. K(+) serves as cofactor.

It localises to the cytoplasm. It catalyses the reaction (R)-pantothenate + ATP = (R)-4'-phosphopantothenate + ADP + H(+). It participates in cofactor biosynthesis; coenzyme A biosynthesis; CoA from (R)-pantothenate: step 1/5. Catalyzes the phosphorylation of pantothenate (Pan), the first step in CoA biosynthesis. This is Type III pantothenate kinase from Mycobacterium avium (strain 104).